The primary structure comprises 98 residues: uncharacterized protein (98 aa).

The span at 19–31 (RRMSKRSKNKAKK) shows a compositional bias: basic residues. Residues 19 to 47 (RRMSKRSKNKAKKERVPVEDRPPTPMPTS) form a disordered region.

The protein belongs to the lymphocryptovirus BNLF2B family.

This is an uncharacterized protein from Epstein-Barr virus (strain AG876) (HHV-4).